The chain runs to 234 residues: MSTPHINSKKDDFSDIVLMPGDPVRAKYIAEKYLSNFVQVNNTRLMLAYTGFYKNRKISIMSHGIGIPSASLYTRELIIEFNVKKIIRIGTCGAVRDDIKLRDIVISMGASTDSKVNRIRFNDHDFAAIADFDMIYNIVSISKKMKIKVSIGNFFTTDSFYNDDKKMLNILKKYNIIGVDMETAGIYGVASELKVQALSICTVSDHITNKEFLSSKERESSFNDMIELALESVL.

Histidine 5 contributes to the a purine D-ribonucleoside binding site. Phosphate is bound by residues glycine 21, arginine 25, arginine 44, and 88–91; that span reads RIGT. Residues 180–182 and 204–205 contribute to the a purine D-ribonucleoside site; these read DME and SD. Residue aspartate 205 is the Proton donor of the active site.

Belongs to the PNP/UDP phosphorylase family. In terms of assembly, homohexamer; trimer of homodimers.

The enzyme catalyses a purine D-ribonucleoside + phosphate = a purine nucleobase + alpha-D-ribose 1-phosphate. The catalysed reaction is a purine 2'-deoxy-D-ribonucleoside + phosphate = a purine nucleobase + 2-deoxy-alpha-D-ribose 1-phosphate. Functionally, catalyzes the reversible phosphorolytic breakdown of the N-glycosidic bond in the beta-(deoxy)ribonucleoside molecules, with the formation of the corresponding free purine bases and pentose-1-phosphate. The polypeptide is Purine nucleoside phosphorylase DeoD-type (Buchnera aphidicola subsp. Acyrthosiphon pisum (strain 5A)).